Consider the following 491-residue polypeptide: Cytochrome P450 2H1 (491 aa).

Residue cysteine 436 coordinates heme.

Belongs to the cytochrome P450 family. Heme serves as cofactor. As to expression, expressed in liver.

The protein localises to the endoplasmic reticulum membrane. The protein resides in the microsome membrane. It catalyses the reaction an organic molecule + reduced [NADPH--hemoprotein reductase] + O2 = an alcohol + oxidized [NADPH--hemoprotein reductase] + H2O + H(+). In terms of biological role, cytochromes P450 are a group of heme-thiolate monooxygenases. In liver microsomes, this enzyme is involved in an NADPH-dependent electron transport pathway. It oxidizes a variety of structurally unrelated compounds, including steroids, fatty acids, and xenobiotics. This is Cytochrome P450 2H1 (CYP2H1) from Gallus gallus (Chicken).